A 506-amino-acid chain; its full sequence is Maturase K (506 aa).

This sequence belongs to the intron maturase 2 family. MatK subfamily.

Its subcellular location is the plastid. It localises to the chloroplast. Its function is as follows. Usually encoded in the trnK tRNA gene intron. Probably assists in splicing its own and other chloroplast group II introns. This Rhododendron tomentosum (Marsh Labrador tea) protein is Maturase K.